The chain runs to 201 residues: Holliday junction branch migration complex subunit RuvA (201 aa).

The tract at residues 1–64 (MIGRLRGTLA…EDAHLLYGFA (64 aa)) is domain I. Residues 65–143 (EKRERELFRE…AWENMPTIAP (79 aa)) are domain II. The segment at 144-152 (LVMEPRASA) is flexible linker. The segment at 153–201 (TVSSAEADAVSALIALGFKPQEASRAVAAVPGEDLSSEEMIRQALKGMV) is domain III.

Belongs to the RuvA family. As to quaternary structure, homotetramer. Forms an RuvA(8)-RuvB(12)-Holliday junction (HJ) complex. HJ DNA is sandwiched between 2 RuvA tetramers; dsDNA enters through RuvA and exits via RuvB. An RuvB hexamer assembles on each DNA strand where it exits the tetramer. Each RuvB hexamer is contacted by two RuvA subunits (via domain III) on 2 adjacent RuvB subunits; this complex drives branch migration. In the full resolvosome a probable DNA-RuvA(4)-RuvB(12)-RuvC(2) complex forms which resolves the HJ.

It localises to the cytoplasm. The RuvA-RuvB-RuvC complex processes Holliday junction (HJ) DNA during genetic recombination and DNA repair, while the RuvA-RuvB complex plays an important role in the rescue of blocked DNA replication forks via replication fork reversal (RFR). RuvA specifically binds to HJ cruciform DNA, conferring on it an open structure. The RuvB hexamer acts as an ATP-dependent pump, pulling dsDNA into and through the RuvAB complex. HJ branch migration allows RuvC to scan DNA until it finds its consensus sequence, where it cleaves and resolves the cruciform DNA. This Pseudomonas aeruginosa (strain LESB58) protein is Holliday junction branch migration complex subunit RuvA.